The following is a 393-amino-acid chain: Na(+)/H(+) antiporter NhaA (393 aa).

12 helical membrane-spanning segments follow: residues 23 to 43 (AGGITLMAAAALALIVANSPF), 58 to 78 (LSLAHWINDALMAKFFLLVGL), 96 to 116 (MLPGIAAAGGVILPAIIFAVL), 126 to 146 (GWAVPSATDIAFALGVLSLLG), 155 to 175 (VFLATLAILDDLAAVVIIAIF), 178 to 198 (AEISMPYLGAAFITAAVLFVM), 201 to 221 (MGVVKLLPYLISAVILWFFVF), 224 to 244 (GVHATVAGVVAALMIPLKPAP), 265 to 285 (VAFIVVPIFGFANAGISFKGL), 298 to 318 (ILLGLFLGKQFGVFGAAWLAI), 334 to 354 (LYGVAILCGIGFTMSIFIGLL), and 367 to 387 (IGVLSGSALSAICGYLLLRAA).

Belongs to the NhaA Na(+)/H(+) (TC 2.A.33) antiporter family.

The protein localises to the cell inner membrane. It carries out the reaction Na(+)(in) + 2 H(+)(out) = Na(+)(out) + 2 H(+)(in). Functionally, na(+)/H(+) antiporter that extrudes sodium in exchange for external protons. The polypeptide is Na(+)/H(+) antiporter NhaA (Brucella suis (strain ATCC 23445 / NCTC 10510)).